The sequence spans 377 residues: Putative F-box protein At3g13830 (377 aa).

In terms of domain architecture, F-box spans 6–52 (TTTMSTLPMVLVDEILSRVPITSLRSLRSTCKRWEAQSKTNLVGGKA).

The polypeptide is Putative F-box protein At3g13830 (Arabidopsis thaliana (Mouse-ear cress)).